A 393-amino-acid chain; its full sequence is G protein-activated inward rectifier potassium channel 3 (393 aa).

A disordered region spans residues 1-23 (MAQENAAFSPGSEEPPRRRGRQR). The Cytoplasmic segment spans residues 1 to 57 (MAQENAAFSPGSEEPPRRRGRQRYVEKDGRCNVQQGNVRETYRYLTDLFTTLVDLQW). A helical membrane pass occupies residues 58–82 (RLSLLFFVLAYALTWLFFGAIWWLI). The Extracellular segment spans residues 83 to 106 (AYGRGDLEHLEDTAWTPCVNNLNG). An intramembrane region (helical; Pore-forming) is located at residues 107 to 118 (FVAAFLFSIETE). The pore-forming intramembrane region spans 119–125 (TTIGYGH). A Selectivity filter motif is present at residues 120 to 125 (TIGYGH). Residues 126–134 (RVITDQCPE) lie on the Extracellular side of the membrane. A helical membrane pass occupies residues 135-156 (GIVLLLLQAILGSMVNAFMVGC). Topologically, residues 157–393 (MFVKISQPNK…LPPPESESKV (237 aa)) are cytoplasmic. Residues 360–393 (KVEEEGAGEGAGAGDGADKEHNGCLPPPESESKV) are disordered. Positions 384-393 (LPPPESESKV) are enriched in pro residues. Residues 390-393 (ESKV) carry the PDZ-binding motif.

It belongs to the inward rectifier-type potassium channel (TC 1.A.2.1) family. KCNJ9 subfamily. In terms of assembly, associates with KCNJ3/GIRK1 to form a G-protein-activated heteromultimer pore-forming unit. Interacts (via PDZ-binding motif) with SNX27 (via PDZ domain); the interaction is required when endocytosed to prevent degradation in lysosomes and promote recycling to the plasma membrane. Expressed mainly in the brain, some expression in the skeletal muscle.

It is found in the membrane. The catalysed reaction is K(+)(in) = K(+)(out). Its function is as follows. Inward rectifier potassium channels are characterized by a greater tendency to allow potassium to flow into the cell rather than out of it. Their voltage dependence is regulated by the concentration of extracellular potassium; as external potassium is raised, the voltage range of the channel opening shifts to more positive voltages. The inward rectification is mainly due to the blockage of outward current by internal magnesium. This receptor is controlled by G proteins. Unable to produce channel activity when expressed alone. Forms a functional channel in association with KCNJ3/GIRK1. This Mus musculus (Mouse) protein is G protein-activated inward rectifier potassium channel 3 (Kcnj9).